Consider the following 1476-residue polypeptide: ABC transporter G family member 17 (1476 aa).

2 disordered regions span residues 13–45 and 68–91; these read SENN…YDYD and FREI…KPEN. Residues 14–67 are a coiled coil; that stretch reads ENNNNNNNNNNNNNNNNNNNLNNNNDNDYDYDSINNIEEKFENVSKELEGQSIK. The span at 15 to 39 shows a compositional bias: low complexity; sequence NNNNNNNNNNNNNNNNNNNLNNNND. Positions 151 to 402 constitute an ABC transporter 1 domain; it reads LNPFNYFKKD…FLDLGFDCEP (252 aa). Positions 507–751 constitute an ABC transmembrane type-2 1 domain; that stretch reads WGDKFTLTSR…SLSVKGENYL (245 aa). Transmembrane regions (helical) follow at residues 517 to 537, 547 to 567, 592 to 612, 623 to 643, and 764 to 784; these read FLTI…QPLT, AIFT…HGAL, ILID…IVYF, FFIF…LFRG, and LNVV…LFAV. An ABC transporter 2 domain is found at 838-1082; it reads FSWKSISYTV…LTSYFERHGV (245 aa). Position 874–881 (874–881) interacts with ATP; that stretch reads GSSGAGKT. 6 helical membrane-spanning segments follow: residues 1182–1202, 1219–1239, 1260–1280, 1298–1318, 1322–1342, and 1450–1470; these read FYTM…GFTF, SWEA…MFFI, LSMI…FFIA, WLMH…LGAA, IAIS…LCGV, and FGII…FVYL. An ABC transmembrane type-2 2 domain is found at 1182–1405; that stretch reads FYTMGSFAQS…TDCQTYSAPF (224 aa).

It belongs to the ABC transporter superfamily. ABCG family. PDR (TC 3.A.1.205) subfamily.

The protein resides in the membrane. This Dictyostelium discoideum (Social amoeba) protein is ABC transporter G family member 17 (abcG17-1).